The following is a 256-amino-acid chain: 4-hydroxy-tetrahydrodipicolinate reductase (256 aa).

8 to 13 (GATGRV) is an NAD(+) binding site. Residue Lys36 participates in NADP(+) binding. NAD(+) contacts are provided by residues 89–91 (GTT) and 113–116 (ATNM). The active-site Proton donor/acceptor is His145. His146 serves as a coordination point for (S)-2,3,4,5-tetrahydrodipicolinate. The Proton donor role is filled by Lys149. Residue 155-156 (GT) participates in (S)-2,3,4,5-tetrahydrodipicolinate binding.

It belongs to the DapB family.

It is found in the cytoplasm. The enzyme catalyses (S)-2,3,4,5-tetrahydrodipicolinate + NAD(+) + H2O = (2S,4S)-4-hydroxy-2,3,4,5-tetrahydrodipicolinate + NADH + H(+). It catalyses the reaction (S)-2,3,4,5-tetrahydrodipicolinate + NADP(+) + H2O = (2S,4S)-4-hydroxy-2,3,4,5-tetrahydrodipicolinate + NADPH + H(+). The protein operates within amino-acid biosynthesis; L-lysine biosynthesis via DAP pathway; (S)-tetrahydrodipicolinate from L-aspartate: step 4/4. Its function is as follows. Catalyzes the conversion of 4-hydroxy-tetrahydrodipicolinate (HTPA) to tetrahydrodipicolinate. The chain is 4-hydroxy-tetrahydrodipicolinate reductase from Wolinella succinogenes (strain ATCC 29543 / DSM 1740 / CCUG 13145 / JCM 31913 / LMG 7466 / NCTC 11488 / FDC 602W) (Vibrio succinogenes).